The primary structure comprises 347 residues: NADH-ubiquinone oxidoreductase chain 2 (347 aa).

Helical transmembrane passes span 3 to 23 (PIIF…VMIS), 25 to 45 (HWLR…PIMM), 66 to 86 (ASML…QWTV), 96 to 116 (MLMT…FWVP), 122 to 142 (IPLS…MSVL), 145 to 165 (ILPS…IMIG), 178 to 198 (IMAY…PYNP), 200 to 220 (MMLL…LLFM), 237 to 257 (MPIM…LPPL), 274 to 294 (NSII…YFYM), and 325 to 345 (LLPT…ILSI).

It belongs to the complex I subunit 2 family. Core subunit of respiratory chain NADH dehydrogenase (Complex I) which is composed of 45 different subunits. Interacts with TMEM242.

It is found in the mitochondrion inner membrane. It catalyses the reaction a ubiquinone + NADH + 5 H(+)(in) = a ubiquinol + NAD(+) + 4 H(+)(out). Core subunit of the mitochondrial membrane respiratory chain NADH dehydrogenase (Complex I) which catalyzes electron transfer from NADH through the respiratory chain, using ubiquinone as an electron acceptor. Essential for the catalytic activity and assembly of complex I. The polypeptide is NADH-ubiquinone oxidoreductase chain 2 (Capra hircus (Goat)).